A 298-amino-acid polypeptide reads, in one-letter code: uncharacterized protein (298 aa).

9 consecutive transmembrane segments (helical) span residues 10 to 30, 36 to 56, 76 to 96, 101 to 121, 142 to 162, 179 to 199, 212 to 232, 243 to 263, and 271 to 291; these read VIYT…WKLL, LDIL…VLFF, ILSL…YIWA, FLLE…LLGI, GVII…LLAF, AIGL…YLLF, GTWL…LLFA, VGIL…FVYH, and AFTF…QVKW. EamA domains lie at 17 to 148 and 162 to 286; these read FIMW…ISAF and FSFG…LFTF.

This sequence belongs to the EamA transporter family.

The protein resides in the cell membrane. This is an uncharacterized protein from Bacillus subtilis (strain 168).